Consider the following 356-residue polypeptide: MTIDHSVTNTEQLEQQNPAIKTKLKLKKLKDQVIVITGASSGIGLVTARMAAEKGAKVVAAARNEEALKELTDELKEKGHDAIWVKADVGKEEDVNRIAETAISTFGRFDTWVNNAAVSTFGHAMDVTVEDMKRMFDTNFWGPVYGTRAAVKHYTGRGVPGALINVGSLFGDRGTVIQSTYASAKFALHGWTESIRMELEKEQAPVSVTLIHPGRIDTPYNEHAHSYLDKQPAHYRSMIYPPEAVAEAILFAAEHPKRDMYIGSQAKAIAMLGALFPRLTDRLMEKIMYHSQHAERPSNPREESALYDAGCGMHDRGTNKGWMRSRSYYTKATKRPIVSAAVVAGLVAWAAAKRCR.

NADP(+) is bound at residue 37-44; sequence TGASSGIG. Ser-168 provides a ligand contact to substrate. The active-site Proton acceptor is the Tyr-181.

This sequence belongs to the short-chain dehydrogenases/reductases (SDR) family.

This is an uncharacterized protein from Bacillus subtilis (strain 168).